The sequence spans 266 residues: Protein crossbronx-like (266 aa).

The 164-residue stretch at 15–178 (KQGYHILAEY…VQEQAILSRN (164 aa)) folds into the UBC core domain. Residues 226-266 (SEYLGHIDSSRQMDEEETNQLEKLHRGRIPEPQREEAEVSL) are disordered. Residues 245 to 266 (QLEKLHRGRIPEPQREEAEVSL) are compositionally biased toward basic and acidic residues.

It belongs to the ubiquitin-conjugating enzyme family. FTS subfamily.

This Drosophila sechellia (Fruit fly) protein is Protein crossbronx-like.